The following is a 309-amino-acid chain: Lactamase-like protein aptB (309 aa).

Zn(2+) contacts are provided by His97, His99, Asp101, and His102. Residue Asp101 is the Proton donor/acceptor of the active site.

It belongs to the metallo-beta-lactamase superfamily. It depends on Zn(2+) as a cofactor.

The enzyme catalyses 2,3,6,8,9-pentahydroxy-1-oxo-3-(2-oxopropyl)-1,2,3,4-tetrahydroanthracene-2-carboxyl-[ACP] + H2O = 2,3,6,8,9-pentahydroxy-1-oxo-3-(2-oxopropyl)-1,2,3,4-tetrahydroanthracene-2-carboxylate + holo-[ACP] + H(+). Its pathway is secondary metabolite biosynthesis. Lactamase-like protein; part of the gene cluster that mediates the biosynthesis of asperthecin, an anthraquinone pigment. Polyketide synthase (PKS) aptA catalyzes the formation of the aromatic polyketide from acetyl coenzyme A and seven malonyl coenzyme A molecules. Polyketide is subsequently hydrolyzed by the action of aptB into endocrocin-9-anthrone. Endocrocin-9-anthrone is then oxidized into endocrocin by aptC. Endocrocin is likely to decarboxylate spontaneously to form emodin which explains why there is no decarboxylase in the asperthecin biosynthesis cluster. Finally, aptC or another endogenous oxygenase catalyzes additional oxidation steps to form asperthecin. The sequence is that of Lactamase-like protein aptB from Emericella nidulans (strain FGSC A4 / ATCC 38163 / CBS 112.46 / NRRL 194 / M139) (Aspergillus nidulans).